Here is a 189-residue protein sequence, read N- to C-terminus: Adenine phosphoribosyltransferase (189 aa).

The protein belongs to the purine/pyrimidine phosphoribosyltransferase family. In terms of assembly, homodimer.

The protein resides in the cytoplasm. The catalysed reaction is AMP + diphosphate = 5-phospho-alpha-D-ribose 1-diphosphate + adenine. It participates in purine metabolism; AMP biosynthesis via salvage pathway; AMP from adenine: step 1/1. In terms of biological role, catalyzes a salvage reaction resulting in the formation of AMP, that is energically less costly than de novo synthesis. The sequence is that of Adenine phosphoribosyltransferase from Frankia alni (strain DSM 45986 / CECT 9034 / ACN14a).